The following is a 227-amino-acid chain: Floral homeotic protein DEFICIENS (227 aa).

The MADS-box domain occupies 3 to 57; it reads RGKIQIKRIENQTNRQVTYSKRRNGLFKKAHELSVLCDAKVSIIMISSTQKLHEY. Positions 84–174 constitute a K-box domain; sequence YEKMQEHLKK…VLEFDARRED (91 aa).

The protein resides in the nucleus. In terms of biological role, transcription factor involved in the genetic control of flower development. Acts in conjunction with GLOBOSA (glo). The chain is Floral homeotic protein DEFICIENS (DEFA) from Antirrhinum majus (Garden snapdragon).